Reading from the N-terminus, the 318-residue chain is MFGVTLAELSASLGDPVLALGLAAFALLLLAIPISFWMVSGGSNSAVVTLLVALANLVLTAQLVLRWWQSGHFPISNLYESLCFLAWACTLAQLLVERSLSSPIVSAAATPMALLCVAFASFALPETLQEASPLVPALRSSWLVMHVSVIMCSYAALLVGSFLSMAVLFTDRQQTLELRSSSIGTGGFRQAKLATSSMDQSDGLRLSSINLSRTEQLDSLSYRTITVGFLLLTLGLISGAVWANEAWGSWWSWDPKETWALICWMVYAAYLHTRFSRGWSGRRPALVAVAGIVVIVVCYIGVNLLGIGLHSYGWFFEA.

Helical transmembrane passes span 17–37, 45–65, 75–95, 104–124, 149–169, 224–244, 258–275, and 287–307; these read VLAL…ISFW, SAVV…QLVL, ISNL…AQLL, IVSA…SFAL, VIMC…AVLF, TITV…VWAN, TWAL…HTRF, and VAVA…LLGI.

This sequence belongs to the CcmF/CycK/Ccl1/NrfE/CcsA family. May interact with ccs1.

The protein resides in the cellular thylakoid membrane. Functionally, required during biogenesis of c-type cytochromes (cytochrome c6 and cytochrome f) at the step of heme attachment. The protein is Cytochrome c biogenesis protein CcsA of Prochlorococcus marinus (strain MIT 9313).